A 672-amino-acid polypeptide reads, in one-letter code: Spermatid perinuclear RNA-binding protein (672 aa).

Residues 5–363 (RSFANDDRHV…ALKRPFEDGL (359 aa)) enclose the DZF domain. 2 disordered regions span residues 52-73 (TNKGTKTEGETEVKKDEAGENY) and 349-371 (GAGSSALKRPFEDGLGDDKDPNK). The span at 357 to 371 (RPFEDGLGDDKDPNK) shows a compositional bias: basic and acidic residues. One can recognise a DRBM 1 domain in the interval 387 to 453 (DLMNALMRLN…AVKVLQAMGY (67 aa)). Basic and acidic residues predominate over residues 466–476 (SDEKSDNESKN). Positions 466 to 499 (SDEKSDNESKNETVSSNSSNNTGNSTTETSSTLE) are disordered. The span at 477–497 (ETVSSNSSNNTGNSTTETSST) shows a compositional bias: low complexity. The 67-residue stretch at 510 to 576 (SGKNPVMELN…ALAALEKLFS (67 aa)) folds into the DRBM 2 domain. 2 positions are modified to asymmetric dimethylarginine: arginine 612 and arginine 617.

As to quaternary structure, interacts with EIF2AK2. Associates with microtubules; it is unsure whether such interaction is direct or indirect.

The protein resides in the cytoplasm. In terms of biological role, involved in spermatogenesis and sperm function. Plays a role in regulation of cell growth. Binds to double-stranded DNA and RNA. Binds most efficiently to poly(I:C) RNA than to poly(dI:dC) DNA. Binds also to single-stranded poly(G) RNA. Binds non-specifically to the mRNA PRM1 3'-UTR and adenovirus VA RNA. This Pongo abelii (Sumatran orangutan) protein is Spermatid perinuclear RNA-binding protein (STRBP).